The sequence spans 100 residues: Large ribosomal subunit protein bL21 (100 aa).

It belongs to the bacterial ribosomal protein bL21 family. As to quaternary structure, part of the 50S ribosomal subunit. Contacts protein L20.

This protein binds to 23S rRNA in the presence of protein L20. This is Large ribosomal subunit protein bL21 from Ureaplasma urealyticum serovar 10 (strain ATCC 33699 / Western).